The following is a 376-amino-acid chain: Queuine tRNA-ribosyltransferase (376 aa).

Asp92 serves as the catalytic Proton acceptor. Substrate is bound by residues 92 to 96, Asp146, Gln190, and Gly217; that span reads DSGGF. Positions 248–254 are RNA binding; that stretch reads GVGRPED. Residue Asp267 is the Nucleophile of the active site. The interval 272–276 is RNA binding; important for wobble base 34 recognition; that stretch reads TRNAR. Zn(2+)-binding residues include Cys305, Cys307, Cys310, and His337.

Belongs to the queuine tRNA-ribosyltransferase family. Homodimer. Within each dimer, one monomer is responsible for RNA recognition and catalysis, while the other monomer binds to the replacement base PreQ1. Zn(2+) is required as a cofactor.

The catalysed reaction is 7-aminomethyl-7-carbaguanine + guanosine(34) in tRNA = 7-aminomethyl-7-carbaguanosine(34) in tRNA + guanine. It functions in the pathway tRNA modification; tRNA-queuosine biosynthesis. In terms of biological role, catalyzes the base-exchange of a guanine (G) residue with the queuine precursor 7-aminomethyl-7-deazaguanine (PreQ1) at position 34 (anticodon wobble position) in tRNAs with GU(N) anticodons (tRNA-Asp, -Asn, -His and -Tyr). Catalysis occurs through a double-displacement mechanism. The nucleophile active site attacks the C1' of nucleotide 34 to detach the guanine base from the RNA, forming a covalent enzyme-RNA intermediate. The proton acceptor active site deprotonates the incoming PreQ1, allowing a nucleophilic attack on the C1' of the ribose to form the product. After dissociation, two additional enzymatic reactions on the tRNA convert PreQ1 to queuine (Q), resulting in the hypermodified nucleoside queuosine (7-(((4,5-cis-dihydroxy-2-cyclopenten-1-yl)amino)methyl)-7-deazaguanosine). In Stenotrophomonas maltophilia (strain R551-3), this protein is Queuine tRNA-ribosyltransferase.